Reading from the N-terminus, the 387-residue chain is Formate-dependent phosphoribosylglycinamide formyltransferase (387 aa).

Residues 21-22 (EL) and E81 each bind N(1)-(5-phospho-beta-D-ribosyl)glycinamide. ATP-binding positions include R113, K154, 159 to 164 (SSGHGQ), 193 to 196 (EEFI), and E201. Positions 118–306 (TFAAEEVGVK…EFALHLRAVL (189 aa)) constitute an ATP-grasp domain. Positions 265 and 277 each coordinate Mg(2+). N(1)-(5-phospho-beta-D-ribosyl)glycinamide contacts are provided by residues D284, K352, and 359-360 (RR).

This sequence belongs to the PurK/PurT family. Homodimer.

The enzyme catalyses N(1)-(5-phospho-beta-D-ribosyl)glycinamide + formate + ATP = N(2)-formyl-N(1)-(5-phospho-beta-D-ribosyl)glycinamide + ADP + phosphate + H(+). Its pathway is purine metabolism; IMP biosynthesis via de novo pathway; N(2)-formyl-N(1)-(5-phospho-D-ribosyl)glycinamide from N(1)-(5-phospho-D-ribosyl)glycinamide (formate route): step 1/1. Its function is as follows. Involved in the de novo purine biosynthesis. Catalyzes the transfer of formate to 5-phospho-ribosyl-glycinamide (GAR), producing 5-phospho-ribosyl-N-formylglycinamide (FGAR). Formate is provided by PurU via hydrolysis of 10-formyl-tetrahydrofolate. In Wolinella succinogenes (strain ATCC 29543 / DSM 1740 / CCUG 13145 / JCM 31913 / LMG 7466 / NCTC 11488 / FDC 602W) (Vibrio succinogenes), this protein is Formate-dependent phosphoribosylglycinamide formyltransferase.